The chain runs to 352 residues: Biotin synthase (352 aa).

Residues 41 to 268 (NEVQVSTLLS…ASHVRLSAGR (228 aa)) enclose the Radical SAM core domain. Residues C56, C60, and C63 each coordinate [4Fe-4S] cluster. The [2Fe-2S] cluster site is built by C100, C131, C191, and R263.

The protein belongs to the radical SAM superfamily. Biotin synthase family. In terms of assembly, homodimer. [4Fe-4S] cluster serves as cofactor. The cofactor is [2Fe-2S] cluster.

The catalysed reaction is (4R,5S)-dethiobiotin + (sulfur carrier)-SH + 2 reduced [2Fe-2S]-[ferredoxin] + 2 S-adenosyl-L-methionine = (sulfur carrier)-H + biotin + 2 5'-deoxyadenosine + 2 L-methionine + 2 oxidized [2Fe-2S]-[ferredoxin]. The protein operates within cofactor biosynthesis; biotin biosynthesis; biotin from 7,8-diaminononanoate: step 2/2. In terms of biological role, catalyzes the conversion of dethiobiotin (DTB) to biotin by the insertion of a sulfur atom into dethiobiotin via a radical-based mechanism. The protein is Biotin synthase of Marinobacter nauticus (strain ATCC 700491 / DSM 11845 / VT8) (Marinobacter aquaeolei).